A 222-amino-acid chain; its full sequence is LHFPL tetraspan subfamily member 3 protein (222 aa).

4 helical membrane passes run 22-42 (IGVL…VCFI), 96-116 (FFIG…TLFF), 126-146 (ICAW…MIFP), and 177-197 (ILAI…VVLG).

Belongs to the LHFP family. In terms of tissue distribution, brain-specific.

It localises to the membrane. The sequence is that of LHFPL tetraspan subfamily member 3 protein from Mus musculus (Mouse).